The sequence spans 130 residues: Small ribosomal subunit protein uS11 (130 aa).

It belongs to the universal ribosomal protein uS11 family. As to quaternary structure, part of the 30S ribosomal subunit. Interacts with proteins S7 and S18. Binds to IF-3.

In terms of biological role, located on the platform of the 30S subunit, it bridges several disparate RNA helices of the 16S rRNA. Forms part of the Shine-Dalgarno cleft in the 70S ribosome. The chain is Small ribosomal subunit protein uS11 from Campylobacter curvus (strain 525.92).